We begin with the raw amino-acid sequence, 262 residues long: Thiamine thiazole synthase (262 aa).

NAD(+) is bound by residues Ala-36, 55-56 (EK), Gly-63, Val-127, and 154-156 (HVD). The Fe cation site is built by Asp-156 and His-171. Position 224 (Met-224) interacts with NAD(+). Arg-234 is a binding site for glycine.

The protein belongs to the THI4 family. In terms of assembly, homooctamer; tetramer of dimers. It depends on Fe(2+) as a cofactor.

It catalyses the reaction hydrogen sulfide + glycine + NAD(+) = ADP-5-ethyl-4-methylthiazole-2-carboxylate + nicotinamide + 3 H2O + H(+). It participates in cofactor biosynthesis; thiamine diphosphate biosynthesis. In terms of biological role, involved in the biosynthesis of the thiazole moiety of thiamine. Catalyzes the conversion of NAD and glycine to adenosine diphosphate 5-(2-hydroxyethyl)-4-methylthiazole-2-carboxylate (ADT), an adenylated thiazole intermediate, using free sulfide as a source of sulfur. This Methanothrix thermoacetophila (strain DSM 6194 / JCM 14653 / NBRC 101360 / PT) (Methanosaeta thermophila) protein is Thiamine thiazole synthase.